A 401-amino-acid chain; its full sequence is Elongation factor Tu, apicoplast (401 aa).

One can recognise a tr-type G domain in the interval 10–206 (KPHINIGTIG…ALDSYIPLPK (197 aa)). The tract at residues 19–26 (GHVDHGKT) is G1. 19-26 (GHVDHGKT) is a GTP binding site. Thr26 contacts Mg(2+). Residues 60-64 (GITIK) are G2. The interval 81-84 (DCPG) is G3. Residues 81-85 (DCPGH) and 136-139 (NKID) contribute to the GTP site. The tract at residues 136-139 (NKID) is G4. The tract at residues 173–175 (SAL) is G5.

This sequence belongs to the TRAFAC class translation factor GTPase superfamily. Classic translation factor GTPase family. EF-Tu/EF-1A subfamily. In terms of assembly, monomer.

It localises to the plastid. It is found in the apicoplast. The enzyme catalyses GTP + H2O = GDP + phosphate + H(+). In terms of biological role, GTP hydrolase that promotes the GTP-dependent binding of aminoacyl-tRNA to the A-site of ribosomes during protein biosynthesis. This is Elongation factor Tu, apicoplast (tufA) from Toxoplasma gondii.